A 91-amino-acid polypeptide reads, in one-letter code: Insertion element IS1 2 protein InsA (91 aa).

Belongs to the IS1 elements InsA family.

Absolutely required for transposition of IS1. The protein is Insertion element IS1 2 protein InsA (insA2) of Escherichia coli (strain K12).